We begin with the raw amino-acid sequence, 49 residues long: Small integral membrane protein 27 (49 aa).

The helical transmembrane segment at 11-31 (WTYSLLLLAIVLLSWGFVIYA) threads the bilayer.

The protein localises to the membrane. The protein is Small integral membrane protein 27 of Mus musculus (Mouse).